The chain runs to 317 residues: UV DNA damage endonuclease (317 aa).

Belongs to the uve1/UvsE family.

Functionally, component in a DNA repair pathway. Removal of UV LIGHT damaged nucleotides. Recognizes pyrimidine dimers and cleave a phosphodiester bond immediately 5' to the lesion. The sequence is that of UV DNA damage endonuclease from Bacillus cereus (strain Q1).